The following is a 140-amino-acid chain: Large ribosomal subunit protein uL16 (140 aa).

This sequence belongs to the universal ribosomal protein uL16 family. As to quaternary structure, part of the 50S ribosomal subunit.

In terms of biological role, binds 23S rRNA and is also seen to make contacts with the A and possibly P site tRNAs. The protein is Large ribosomal subunit protein uL16 of Malacoplasma penetrans (strain HF-2) (Mycoplasma penetrans).